The following is a 485-amino-acid chain: UBX domain-containing protein 11 (485 aa).

Residues 1–26 (MSSPLASLSKTRKVPLESEPVNPGRR) form a disordered region. Positions 67–143 (HDSELLTSMA…VGEMERFLND (77 aa)) form a coiled coil. Residues 224–288 (LEPIPLKLYR…VSDLRNQVYP (65 aa)) form the SEP domain. The 78-residue stretch at 386 to 463 (PVPPLSMLRI…GLVPNATLLL (78 aa)) folds into the UBX domain. A phosphoserine mark is found at Ser-479 and Ser-483.

Interacts with GNA12, GNA13, RND1, RND2 and RND3. Strongly expressed in testis. Also expressed in lung, brain and thymus.

It is found in the cytoplasm. The protein resides in the cytoskeleton. Functionally, may be involved in the reorganization of actin cytoskeleton mediated by RND1, RND2 and RND3. Promotes RHOA activation mediated by GNA12 and GNA13. In Rattus norvegicus (Rat), this protein is UBX domain-containing protein 11 (Ubxn11).